The chain runs to 220 residues: Adenylate kinase (220 aa).

10–15 (GAGKGT) is an ATP binding site. The segment at 30-59 (STGDLFRANISQQTELGKLAKSYMDEGNLV) is NMP. AMP is bound by residues Thr31, Arg36, 57 to 59 (NLV), 85 to 88 (GFPR), and Gln92. The tract at residues 126–164 (GRRICRNDSAHVFHVSYKPPKQEGVCDVCGGELYQRDDD) is LID. ATP is bound by residues Arg127 and 137–138 (VF). AMP is bound by residues Arg161 and Arg172. Gly200 is a binding site for ATP.

The protein belongs to the adenylate kinase family. As to quaternary structure, monomer.

The protein localises to the cytoplasm. The catalysed reaction is AMP + ATP = 2 ADP. It participates in purine metabolism; AMP biosynthesis via salvage pathway; AMP from ADP: step 1/1. Catalyzes the reversible transfer of the terminal phosphate group between ATP and AMP. Plays an important role in cellular energy homeostasis and in adenine nucleotide metabolism. This is Adenylate kinase from Streptomyces avermitilis (strain ATCC 31267 / DSM 46492 / JCM 5070 / NBRC 14893 / NCIMB 12804 / NRRL 8165 / MA-4680).